The sequence spans 521 residues: DNA damage-binding protein cmr1 (521 aa).

The interval 36–75 is disordered; the sequence is DKIIPKPAPPKPKRASTPRVKREPVKKEAARPTRQSSRLA. The span at 55-66 shows a compositional bias: basic and acidic residues; the sequence is VKREPVKKEAAR. WD repeat units lie at residues 183–224, 242–282, 333–373, 382–422, and 490–521; these read IVPQ…PKIE, THSR…STEI, LTDH…GKGD, EHES…EWKA, and DGITAVPAVAHFHPTKDWVAGGTASGKLCLWM.

It belongs to the WD repeat DDB2/WDR76 family.

Its function is as follows. DNA-binding protein that binds to both single- and double-stranded DNA. Binds preferentially to UV-damaged DNA. May be involved in DNA-metabolic processes. The sequence is that of DNA damage-binding protein cmr1 from Neurospora crassa (strain ATCC 24698 / 74-OR23-1A / CBS 708.71 / DSM 1257 / FGSC 987).